The primary structure comprises 298 residues: Inosose dehydratase 1 (298 aa).

It belongs to the IolE/MocC family. Requires glutathione as cofactor. Co(2+) serves as cofactor. It depends on Mn(2+) as a cofactor.

It carries out the reaction scyllo-inosose = 3D-3,5/4-trihydroxycyclohexane-1,2-dione + H2O. It participates in polyol metabolism; myo-inositol degradation into acetyl-CoA; acetyl-CoA from myo-inositol: step 2/7. Functionally, catalyzes the dehydration of inosose (2-keto-myo-inositol, 2KMI or 2,4,6/3,5-pentahydroxycyclohexanone) to 3D-(3,5/4)-trihydroxycyclohexane-1,2-dione (D-2,3-diketo-4-deoxy-epi-inositol). This Bacillus cereus (strain ZK / E33L) protein is Inosose dehydratase 1.